The sequence spans 299 residues: Probable alpha-L-glutamate ligase (299 aa).

Residues 111–293 (LQALAAANIA…VATQMIAYLE (183 aa)) form the ATP-grasp domain. ATP contacts are provided by residues lysine 147, 184 to 185 (DF), aspartate 193, and 217 to 219 (RAN). The Mg(2+) site is built by aspartate 254, glutamate 266, and asparagine 268. Residues aspartate 254, glutamate 266, and asparagine 268 each contribute to the Mn(2+) site.

The protein belongs to the RimK family. Requires Mg(2+) as cofactor. Mn(2+) is required as a cofactor.

The polypeptide is Probable alpha-L-glutamate ligase (Mannheimia succiniciproducens (strain KCTC 0769BP / MBEL55E)).